Here is a 345-residue protein sequence, read N- to C-terminus: Dihydroorotate dehydrogenase (quinone) (345 aa).

FMN-binding positions include 65 to 69 (AGLDK) and threonine 89. Lysine 69 lines the substrate pocket. 114–118 (NRMGF) is a substrate binding site. Asparagine 142 and asparagine 175 together coordinate FMN. Asparagine 175 contacts substrate. Serine 178 serves as the catalytic Nucleophile. A substrate-binding site is contributed by asparagine 180. 2 residues coordinate FMN: lysine 220 and threonine 248. 249–250 (NT) contributes to the substrate binding site. Residues glycine 271, glycine 300, and 321-322 (YT) each bind FMN.

Belongs to the dihydroorotate dehydrogenase family. Type 2 subfamily. In terms of assembly, monomer. The cofactor is FMN.

Its subcellular location is the cell membrane. The catalysed reaction is (S)-dihydroorotate + a quinone = orotate + a quinol. It participates in pyrimidine metabolism; UMP biosynthesis via de novo pathway; orotate from (S)-dihydroorotate (quinone route): step 1/1. In terms of biological role, catalyzes the conversion of dihydroorotate to orotate with quinone as electron acceptor. The sequence is that of Dihydroorotate dehydrogenase (quinone) from Burkholderia multivorans (strain ATCC 17616 / 249).